Here is an 85-residue protein sequence, read N- to C-terminus: RNA-binding protein KhpA (85 aa).

The KH domain maps to 32–85; it reads YLEYNLTVNPEDIGRVIGRQGRVASAIRTIVYSVRVSGPKRVRLTIEDGQQKNS.

It belongs to the KhpA RNA-binding protein family. In terms of assembly, forms a complex with KhpB.

The protein resides in the cytoplasm. In terms of biological role, a probable RNA chaperone. Forms a complex with KhpB which binds to cellular RNA and controls its expression. Plays a role in peptidoglycan (PG) homeostasis and cell length regulation. Its function is as follows. Necessary for correct cell elongation. The polypeptide is RNA-binding protein KhpA (Lactiplantibacillus plantarum (strain ATCC BAA-793 / NCIMB 8826 / WCFS1) (Lactobacillus plantarum)).